The sequence spans 84 residues: ATP synthase subunit c (84 aa).

Helical transmembrane passes span 10–30 (IAVGIIVGLASLGTAIGFALL) and 53–73 (FIIAGLLDAVPMIGIVIALLF).

It belongs to the ATPase C chain family. F-type ATPases have 2 components, F(1) - the catalytic core - and F(0) - the membrane proton channel. F(1) has five subunits: alpha(3), beta(3), gamma(1), delta(1), epsilon(1). F(0) has three main subunits: a(1), b(2) and c(10-14). The alpha and beta chains form an alternating ring which encloses part of the gamma chain. F(1) is attached to F(0) by a central stalk formed by the gamma and epsilon chains, while a peripheral stalk is formed by the delta and b chains.

The protein localises to the cell inner membrane. Its function is as follows. F(1)F(0) ATP synthase produces ATP from ADP in the presence of a proton or sodium gradient. F-type ATPases consist of two structural domains, F(1) containing the extramembraneous catalytic core and F(0) containing the membrane proton channel, linked together by a central stalk and a peripheral stalk. During catalysis, ATP synthesis in the catalytic domain of F(1) is coupled via a rotary mechanism of the central stalk subunits to proton translocation. Functionally, key component of the F(0) channel; it plays a direct role in translocation across the membrane. A homomeric c-ring of between 10-14 subunits forms the central stalk rotor element with the F(1) delta and epsilon subunits. The polypeptide is ATP synthase subunit c (Vibrio alginolyticus).